Here is a 1175-residue protein sequence, read N- to C-terminus: DNA ligase 3 (1175 aa).

The tract at residues 195–243 (HDFDNDNGDGDDGDGDDNDDDDGDGDSDSDKKKKKSSGGSGSDSGSKKK) is disordered. Residues 199-221 (NDNGDGDDGDGDDNDDDDGDGDS) show a composition bias toward acidic residues. Glu-281 serves as a coordination point for ATP. Lys-283 acts as the N6-AMP-lysine intermediate in catalysis. The ATP site is built by Arg-288 and Arg-303. Residues Glu-334 and Glu-432 each contribute to the Mg(2+) site. Positions 437, 448, and 452 each coordinate ATP. Disordered regions lie at residues 612 to 669 (PVGK…LKFV) and 829 to 869 (KSSP…KRGR). 2 stretches are compositionally biased toward low complexity: residues 622–635 (TTTT…TTTT) and 829–859 (KSSP…SSPS). Residues 883–976 (PSLPIFEDVN…KLLPLHEDYI (94 aa)) enclose the BRCT 1 domain. A disordered region spans residues 984-1036 (PDYSQSSSSSSMSIEEEKIVVTTTSDDPSEGNQQQQDKKVIKESKIIQSKDHS). Residues 987–996 (SQSSSSSSMS) show a composition bias toward low complexity. The span at 1004 to 1018 (VTTTSDDPSEGNQQQ) shows a compositional bias: polar residues. A compositionally biased stretch (basic and acidic residues) spans 1019-1036 (QDKKVIKESKIIQSKDHS). The region spanning 1067–1174 (HLLSIFQECI…DLLDVKNYKL (108 aa)) is the BRCT 2 domain.

It belongs to the ATP-dependent DNA ligase family. Mg(2+) serves as cofactor.

Its subcellular location is the nucleus. It catalyses the reaction ATP + (deoxyribonucleotide)n-3'-hydroxyl + 5'-phospho-(deoxyribonucleotide)m = (deoxyribonucleotide)n+m + AMP + diphosphate.. The alpha isoform interacts with DNA-repair protein XRCC1 and can correct defective DNA strand-break repair and sister chromatid exchange following treatment with ionizing radiation and alkylating agents. The beta isoform does not interact with XRCC1 and may be specifically involved in the completion of homologous recombination events that occur during meiotic prophase. The protein is DNA ligase 3 (lig3) of Dictyostelium discoideum (Social amoeba).